We begin with the raw amino-acid sequence, 159 residues long: uncharacterized protein (159 aa).

This sequence belongs to the IIV-6 136R family.

This is an uncharacterized protein from Invertebrate iridescent virus 3 (IIV-3).